Here is a 347-residue protein sequence, read N- to C-terminus: tRNA N6-adenosine threonylcarbamoyltransferase (347 aa).

Positions 110 and 114 each coordinate Fe cation. Substrate contacts are provided by residues 133–137, Asp-168, Gly-181, Asp-185, and Asn-277; that span reads VVSGG. Asp-305 provides a ligand contact to Fe cation.

This sequence belongs to the KAE1 / TsaD family. Requires Fe(2+) as cofactor.

The protein localises to the cytoplasm. It catalyses the reaction L-threonylcarbamoyladenylate + adenosine(37) in tRNA = N(6)-L-threonylcarbamoyladenosine(37) in tRNA + AMP + H(+). Functionally, required for the formation of a threonylcarbamoyl group on adenosine at position 37 (t(6)A37) in tRNAs that read codons beginning with adenine. Is involved in the transfer of the threonylcarbamoyl moiety of threonylcarbamoyl-AMP (TC-AMP) to the N6 group of A37, together with TsaE and TsaB. TsaD likely plays a direct catalytic role in this reaction. This chain is tRNA N6-adenosine threonylcarbamoyltransferase, found in Kineococcus radiotolerans (strain ATCC BAA-149 / DSM 14245 / SRS30216).